The following is a 357-amino-acid chain: MRPARALIDLQALRHNYQLAREHRGGKALAVIKADAYGHGAVRVAQALEAQADGFAVACIEEALELRAAGIRAPVLLLEGFFEADELALIVEHNFWTVVHSTWQLEAIEQAQLAKPLTVWLKIDTGMHRVGLYPHEYQAAYQRLLVTGKVARIVLMSHFARADELNSGCSDEQFAVFESFRKGLAAEISLKNSPAVLGWPHIPSDWSRPGIMLYGATPFGQAHPLADRLQPVMTLESKIISVRELPAGEAVGYGATFVCDRPLRIGVVAMGYADGYPRHAPTGTPVQIDGQPSRLLGRVSMDMLCVDLTGVPQAGLGSRVELWGKHVLASEVATRAETIPYEIFCNLRRVPRIYSQD.

Residue Lys-33 is the Proton acceptor; specific for D-alanine of the active site. The residue at position 33 (Lys-33) is an N6-(pyridoxal phosphate)lysine. Arg-129 contributes to the substrate binding site. The active-site Proton acceptor; specific for L-alanine is Tyr-253. A substrate-binding site is contributed by Met-301.

This sequence belongs to the alanine racemase family. The cofactor is pyridoxal 5'-phosphate.

The catalysed reaction is L-alanine = D-alanine. It functions in the pathway amino-acid biosynthesis; D-alanine biosynthesis; D-alanine from L-alanine: step 1/1. Its function is as follows. Catalyzes the interconversion of L-alanine and D-alanine. May also act on other amino acids. In Pseudomonas savastanoi pv. phaseolicola (strain 1448A / Race 6) (Pseudomonas syringae pv. phaseolicola (strain 1448A / Race 6)), this protein is Alanine racemase (alr).